We begin with the raw amino-acid sequence, 160 residues long: Aspartate carbamoyltransferase regulatory chain (160 aa).

Residues Cys110, Cys115, Cys140, and Cys143 each contribute to the Zn(2+) site.

It belongs to the PyrI family. Contains catalytic and regulatory chains. Zn(2+) is required as a cofactor.

In terms of biological role, involved in allosteric regulation of aspartate carbamoyltransferase. The protein is Aspartate carbamoyltransferase regulatory chain of Hyperthermus butylicus (strain DSM 5456 / JCM 9403 / PLM1-5).